Here is a 205-residue protein sequence, read N- to C-terminus: Holliday junction branch migration complex subunit RuvA (205 aa).

Residues 1 to 64 form a domain I region; it reads MIAHLRGELV…EDALTLYGFL (64 aa). The domain II stretch occupies residues 65–143; that stretch reads TQAEYDLFEL…AVPAGGGGVP (79 aa). Residues 144–153 are flexible linker; that stretch reads DGLPVAVAPA. Positions 153-205 are domain III; sequence AGDAWAEASEALIALGYSRGEAAAALARVRAEAGEAPSVETLVRLALKQLYRG.

This sequence belongs to the RuvA family. Homotetramer. Forms an RuvA(8)-RuvB(12)-Holliday junction (HJ) complex. HJ DNA is sandwiched between 2 RuvA tetramers; dsDNA enters through RuvA and exits via RuvB. An RuvB hexamer assembles on each DNA strand where it exits the tetramer. Each RuvB hexamer is contacted by two RuvA subunits (via domain III) on 2 adjacent RuvB subunits; this complex drives branch migration. In the full resolvosome a probable DNA-RuvA(4)-RuvB(12)-RuvC(2) complex forms which resolves the HJ.

The protein localises to the cytoplasm. Its function is as follows. The RuvA-RuvB-RuvC complex processes Holliday junction (HJ) DNA during genetic recombination and DNA repair, while the RuvA-RuvB complex plays an important role in the rescue of blocked DNA replication forks via replication fork reversal (RFR). RuvA specifically binds to HJ cruciform DNA, conferring on it an open structure. The RuvB hexamer acts as an ATP-dependent pump, pulling dsDNA into and through the RuvAB complex. HJ branch migration allows RuvC to scan DNA until it finds its consensus sequence, where it cleaves and resolves the cruciform DNA. This is Holliday junction branch migration complex subunit RuvA from Symbiobacterium thermophilum (strain DSM 24528 / JCM 14929 / IAM 14863 / T).